The primary structure comprises 256 residues: Fructose-1,6-bisphosphatase/inositol-1-monophosphatase (256 aa).

Mg(2+) is bound by residues Glu65, Asp79, Ile81, and Asp82. Residues 82–84 (DGT), Arg172, Ala177, and Arg196 contribute to the substrate site. Residue Asp201 coordinates Mg(2+).

It belongs to the inositol monophosphatase superfamily. FBPase class 4 family. In terms of assembly, homotetramer. Mg(2+) is required as a cofactor.

It catalyses the reaction beta-D-fructose 1,6-bisphosphate + H2O = beta-D-fructose 6-phosphate + phosphate. The catalysed reaction is a myo-inositol phosphate + H2O = myo-inositol + phosphate. In contrast to mammalian I-1-P phosphatases, is only weakly inhibited by Li(+), since 50% inhibitory concentration for Li(+) is about 100 mM, and the Li(+) concentration required to totally abolish I-1-Pase activity is 1 M. Its function is as follows. Phosphatase with broad specificity; it can dephosphorylate fructose 1,6-bisphosphate, both D and L isomers of inositol-1-phosphate (I-1-P) but displaying a 20-fold higher rate of hydrolysis of D-I-1-P than of the L isomer, 2'-AMP, pNPP, inositol-2-phosphate, beta-glycerol phosphate, and alpha-D-glucose-1-phosphate. Cannot hydrolyze glucose-6-phosphate, fructose-6-phosphate, 5'-AMP and NAD(+). May be involved in the biosynthesis of a unique osmolyte, di-myo-inositol 1,1-phosphate. This is Fructose-1,6-bisphosphatase/inositol-1-monophosphatase (suhB) from Thermotoga maritima (strain ATCC 43589 / DSM 3109 / JCM 10099 / NBRC 100826 / MSB8).